A 369-amino-acid polypeptide reads, in one-letter code: Secondary metabolism regulator laeA (369 aa).

Residues 1–37 form a disordered region; the sequence is MFGNGQTGQRLPAMASPPHDSYYSQSLASSRSRNNSD. A compositionally biased stretch (low complexity) spans 20-37; sequence DSYYSQSLASSRSRNNSD.

The protein belongs to the methyltransferase superfamily. LaeA methyltransferase family. In terms of assembly, component of the heterotrimeric velvet complex composed of laeA, veA and velB; VeA acting as a bridging protein between laeA and velB. Interacts directly with veA.

It is found in the nucleus. It catalyses the reaction L-methionyl-[protein] + S-adenosyl-L-methionine = S-methyl-L-methionyl-[protein] + S-adenosyl-L-homocysteine. In terms of biological role, methyltransferase that performs automethylation. No other methyl-accepting substrate has been identified yet. Component of the velvet transcription factor complex that acts as a global regulator for secondary metabolite gene expression. Required for aflR expression and subsequent aflatoxin production. Negatively regulates veA expression. Controls conidiophore and conidial development. Required for hydrophobin production which plays a role in cell surface hydrophobicity and host defense escape. The sequence is that of Secondary metabolism regulator laeA from Aspergillus flavus (strain ATCC 200026 / FGSC A1120 / IAM 13836 / NRRL 3357 / JCM 12722 / SRRC 167).